A 171-amino-acid polypeptide reads, in one-letter code: UPF0260 protein Nham_1404 (171 aa).

The protein belongs to the UPF0260 family.

The sequence is that of UPF0260 protein Nham_1404 from Nitrobacter hamburgensis (strain DSM 10229 / NCIMB 13809 / X14).